The chain runs to 417 residues: MKSKSMCTTVGLIAMCLAGSAAAAGKPLYQTGPALSRSAAATATAEPSLQRVLSSPSTANAQVVQIDAGAVAPAEKLLELQLDGQTITATQAKVDALEGGDSIWYGNLGPRAGTRARTLSGVDPLNSAILVRSGDTVTGTIRYAGKLYRLRPLADGRHVLVQVDEQRMPQEHPAEYSLLPKFDMPNDGRVTAAQASSGSPATIRVLVVATNQAVTAYGGNMQSLVQLAVAEANQGYVNSNVGITLQLARYETTSYAETGNFTTDLQRFRVTNDGYMDSIHTSRNTYTADVGVIVLNNSSYCGLASGIGSTAATAFASVYWDCATGYYSFAHEIGHLQSARHDAATDPSTSPFAYGHGYRYGNSWRTIMAYACPSGCPRLNYWSNPNISYNGVPMGNASTADNQRVLVNTKANIAAFR.

A signal peptide spans 1 to 23; the sequence is MKSKSMCTTVGLIAMCLAGSAAA. H331 lines the Zn(2+) pocket. The active site involves E332. 2 residues coordinate Zn(2+): H335 and H341.

This sequence belongs to the peptidase M72 family. Requires Zn(2+) as cofactor.

It carries out the reaction Cleavage of Xaa-|-Asp, Xaa-|-Glu and Xaa-|-cysteic acid bonds.. Functionally, metalloprotease, specifically cleaves on the N-terminal side of aspartyl, glutamyl and cysteic acid residues. The sequence is that of Peptidyl-Asp metalloendopeptidase from Xanthomonas campestris pv. campestris (strain ATCC 33913 / DSM 3586 / NCPPB 528 / LMG 568 / P 25).